Consider the following 403-residue polypeptide: Phosphoglycerate kinase (403 aa).

Substrate contacts are provided by residues 21–23, R36, 59–62, R119, and R154; these read DFN and HLGR. ATP-binding positions include K207, G299, E330, and 357 to 360; that span reads GGDA.

This sequence belongs to the phosphoglycerate kinase family. In terms of assembly, monomer.

It localises to the cytoplasm. The enzyme catalyses (2R)-3-phosphoglycerate + ATP = (2R)-3-phospho-glyceroyl phosphate + ADP. It participates in carbohydrate degradation; glycolysis; pyruvate from D-glyceraldehyde 3-phosphate: step 2/5. In Chlamydia muridarum (strain MoPn / Nigg), this protein is Phosphoglycerate kinase (pgk).